The following is a 359-amino-acid chain: Putative nucleotidyltransferase MAB21L1 (359 aa).

A ribonucleoside 5'-triphosphate-binding positions include 23 to 24 (RK) and 63 to 66 (YEGL). Mg(2+) is bound by residues Glu-73 and Glu-75. A ribonucleoside 5'-triphosphate is bound by residues Lys-248 and 252-255 (SLLK).

The protein belongs to the mab-21 family. Monomer. Homodecamer; composed of 2 back to back homopentamers. The protein may exist as monomer in solution and oiligomerizes upon ligand binding.

The protein resides in the nucleus. In terms of biological role, putative nucleotidyltransferase required for several aspects of embryonic development including normal development of the eye. It is unclear whether it displays nucleotidyltransferase activity in vivo. Binds single-stranded RNA (ssRNA). The chain is Putative nucleotidyltransferase MAB21L1 (mab21l1) from Xenopus tropicalis (Western clawed frog).